A 615-amino-acid polypeptide reads, in one-letter code: Alpha-1,3-galactosidase B (615 aa).

The signal sequence occupies residues 1 to 23; that stretch reads MRTFLSLKTCLLSALLLCVNSIA. PbH1 repeat units lie at residues 282-313, 423-445, 446-467, 478-500, 520-541, and 543-573; these read SKNISFNDVHIIPNTSKKRVLSGHDDGFHFMG, TPDAEIRNCHFGSCRARGLLVST, PGKVIIENNVFESSGSAILIAG, VKDVLIRNNDFRYPCNSSIYQFC, HRNIRIMDNTFHLFDYPILFAR, and VNGLTFSSNTLIRDTTYQPYHYRKEGITLEA.

The protein belongs to the glycosyl hydrolase 110 family. B subfamily.

It catalyses the reaction Hydrolysis of terminal, non-reducing branched (1-&gt;3)-alpha-D-galactosidic residues, producing free D-galactose.. The catalysed reaction is Hydrolysis of terminal, non-reducing linear (1-&gt;3)-alpha-D-galactosidic residues, producing free D-galactose.. The enzyme catalyses Hydrolysis of terminal, non-reducing alpha-D-galactose residues in alpha-D-galactosides, including galactose oligosaccharides, galactomannans and galactolipids.. In terms of biological role, alpha-galactosidase. Removes both branched alpha-1,3-linked galactose residues of blood group B antigens and linear alpha-1,3-linked galactose structures. This is Alpha-1,3-galactosidase B (glaB) from Bacteroides thetaiotaomicron (strain ATCC 29148 / DSM 2079 / JCM 5827 / CCUG 10774 / NCTC 10582 / VPI-5482 / E50).